Reading from the N-terminus, the 227-residue chain is Type II restriction enzyme ScaI (227 aa).

The tract at residues 12–35 is disordered; the sequence is EARVGTRTGGPAMRPKTSDSPYFG.

It carries out the reaction Endonucleolytic cleavage of DNA to give specific double-stranded fragments with terminal 5'-phosphates.. A P subtype restriction enzyme that recognizes the double-stranded sequence 5'-AGTACT-3' and cleaves after T-3. In Streptomyces caespitosus, this protein is Type II restriction enzyme ScaI.